We begin with the raw amino-acid sequence, 206 residues long: Glycerol-3-phosphate acyltransferase 1 (206 aa).

5 helical membrane passes run 14–34 (IALA…GLIL), 67–87 (ATLL…SYFL), 91–111 (AAII…WIGF), 124–144 (LLGV…AVAF), and 148–168 (YSSL…WILG).

Belongs to the PlsY family. As to quaternary structure, probably interacts with PlsX.

It is found in the cell inner membrane. The catalysed reaction is an acyl phosphate + sn-glycerol 3-phosphate = a 1-acyl-sn-glycero-3-phosphate + phosphate. The protein operates within lipid metabolism; phospholipid metabolism. In terms of biological role, catalyzes the transfer of an acyl group from acyl-phosphate (acyl-PO(4)) to glycerol-3-phosphate (G3P) to form lysophosphatidic acid (LPA). This enzyme utilizes acyl-phosphate as fatty acyl donor, but not acyl-CoA or acyl-ACP. The sequence is that of Glycerol-3-phosphate acyltransferase 1 from Rhizobium johnstonii (strain DSM 114642 / LMG 32736 / 3841) (Rhizobium leguminosarum bv. viciae).